The sequence spans 357 residues: Snake venom metalloproteinase H4 (357 aa).

A signal peptide spans 1-6 (FPYQGS). Residues 7–176 (SIMLESGKVN…KKASQLIVST (170 aa)) constitute a propeptide that is removed on maturation. The Peptidase M12B domain maps to 180–357 (RYMEIVIVVD…EVIKYFLDSK (178 aa)). His316 provides a ligand contact to Zn(2+). Glu317 is a catalytic residue. Zn(2+)-binding residues include His320 and His326. Cys333 and Cys339 are disulfide-bonded.

The protein belongs to the venom metalloproteinase (M12B) family. P-I subfamily. In terms of assembly, monomer. Zn(2+) serves as cofactor. In terms of tissue distribution, expressed by the venom gland.

It is found in the secreted. Snake venom metalloproteinase that impairs hemostasis in the envenomed animal. The chain is Snake venom metalloproteinase H4 from Deinagkistrodon acutus (Hundred-pace snake).